A 177-amino-acid polypeptide reads, in one-letter code: Novel acetylcholine receptor chaperone (177 aa).

Topologically, residues 1–5 are cytoplasmic; that stretch reads MASPR. The helical transmembrane segment at 6-26 threads the bilayer; sequence TVTVVALSVALGLFFVFMGTI. Residues 27–61 are Lumenal-facing; it reads KLTPRLSKDAYSEMKRAYKSYVRALPLLKKMGINS. The interaction with NGFR stretch occupies residues 43–54; sequence AYKSYVRALPLL. The chain crosses the membrane as a helical span at residues 62 to 82; sequence ILLRKSIGALEVACGIVMTLV. Over 83 to 88 the chain is Cytoplasmic; sequence PGRPKD. Residues 89–109 form a helical membrane-spanning segment; sequence VANFFLLLLVLAVLFFHQLVG. The Lumenal segment spans residues 110–114; the sequence is DPLKR. Residues 115-132 form a helical membrane-spanning segment; sequence YAHALVFGILLTCRLLIA. Topologically, residues 133-177 are cytoplasmic; it reads RKPEDRSSEKKSSPPGNAGSDGNAGNTEEQPSLYEKAPQGKMKLS. Positions 136-177 are disordered; it reads EDRSSEKKSSPPGNAGSDGNAGNTEEQPSLYEKAPQGKMKLS.

Belongs to the DoxX family. May interact with NGFR. Interacts with RPN1, RPN2 and CANX.

It is found in the peroxisome membrane. The protein resides in the cytoplasmic vesicle. It localises to the endoplasmic reticulum membrane. Functionally, molecular chaperone which mediates the proper assembly and functional expression of the nicotinic acetylcholine receptors (nAChRs) throughout the brain. Essential for the proper folding, assembly, function and surface trafficking of alpha-7 (CHRNA7), alpha-4-beta-2, alpha-3-beta-2 and alpha-3-beta-4 receptors. Stably associates with ribophorin-1 (RPN1) and ribophorin-2 (RPN2) (components of the oligosaccharyl transferase (OST) complex) and with calnexin (CANX), both of which are critical for NACHO-mediated effects on CHRNA7 assembly and function. Facilitates the proper folding and assembly of alpha-6-beta-2 and alpha-6-beta-2-beta-3 receptors and acts at early stages of the nAChRs subunit assembly. Promotes the expression of the alpha-4(2):beta-2(3) stoichiometric form over the alpha-4(3):beta-2(2) form. The sequence is that of Novel acetylcholine receptor chaperone (TMEM35A) from Bos taurus (Bovine).